The sequence spans 245 residues: MINWKVELSYIGKDFWGFQKQPGKRTVQGELEKVLKLLFDEDIKVIGAGRTDAGVHALGQVVNFKTKESKNFSCDKLYKVLNKLLPGDIKIKKVEIVDDNFHARYSAKRRWYIYVIYNNEEKNLFLRDYCWWINKPLDKDLLNLSANLFKGIHDFRNFCVIENYDNTNVEIYESFWYFKEDLLIYFVSAPFFLRKMVRFIVGSMVEVGLKKKELEDLEKYLKDRKEERFSSPAPASGLYLFKIDY.

D52 functions as the Nucleophile in the catalytic mechanism. Y112 lines the substrate pocket.

The protein belongs to the tRNA pseudouridine synthase TruA family. Homodimer.

The catalysed reaction is uridine(38/39/40) in tRNA = pseudouridine(38/39/40) in tRNA. In terms of biological role, formation of pseudouridine at positions 38, 39 and 40 in the anticodon stem and loop of transfer RNAs. The protein is tRNA pseudouridine synthase A of Dictyoglomus thermophilum (strain ATCC 35947 / DSM 3960 / H-6-12).